A 250-amino-acid chain; its full sequence is Putative ankyrin repeat protein RBE_0623 (250 aa).

ANK repeat units follow at residues 70–99 (IGDSLPLVAVKNNNLDMLKMLLSCGFEPNT), 104–134 (NCYTPLWYVTYKGYTNSVRKLLEYPINNINE), and 137–166 (GKETPLKSALIHKHTEIAKLLIDKINPDKF).

This is Putative ankyrin repeat protein RBE_0623 from Rickettsia bellii (strain RML369-C).